The primary structure comprises 448 residues: Exodeoxyribonuclease 7 large subunit (448 aa).

This sequence belongs to the XseA family. In terms of assembly, heterooligomer composed of large and small subunits.

It is found in the cytoplasm. It carries out the reaction Exonucleolytic cleavage in either 5'- to 3'- or 3'- to 5'-direction to yield nucleoside 5'-phosphates.. Bidirectionally degrades single-stranded DNA into large acid-insoluble oligonucleotides, which are then degraded further into small acid-soluble oligonucleotides. This chain is Exodeoxyribonuclease 7 large subunit, found in Shewanella sp. (strain ANA-3).